Consider the following 245-residue polypeptide: Uridylate kinase (245 aa).

14-17 (KLSG) contacts ATP. Gly-56 serves as a coordination point for UMP. ATP-binding residues include Gly-57 and Arg-61. UMP contacts are provided by residues Asp-76 and 137 to 144 (TGLPFFTT). ATP-binding residues include Thr-164, Tyr-170, and Asp-173.

Belongs to the UMP kinase family. In terms of assembly, homohexamer.

The protein localises to the cytoplasm. The catalysed reaction is UMP + ATP = UDP + ADP. It participates in pyrimidine metabolism; CTP biosynthesis via de novo pathway; UDP from UMP (UMPK route): step 1/1. Its activity is regulated as follows. Inhibited by UTP. In terms of biological role, catalyzes the reversible phosphorylation of UMP to UDP. The sequence is that of Uridylate kinase from Syntrophobacter fumaroxidans (strain DSM 10017 / MPOB).